The primary structure comprises 394 residues: Elongation factor Tu (394 aa).

Residues 10-204 form the tr-type G domain; the sequence is KPHVNVGTIG…ALDTYIPEPE (195 aa). Residues 19-26 are G1; it reads GHVDHGKT. 19 to 26 contributes to the GTP binding site; that stretch reads GHVDHGKT. T26 serves as a coordination point for Mg(2+). A G2 region spans residues 60 to 64; sequence GITIN. Residues 81–84 are G3; it reads DCPG. Residues 81-85 and 136-139 contribute to the GTP site; these read DCPGH and NKCD. The segment at 136 to 139 is G4; the sequence is NKCD. The tract at residues 174–176 is G5; that stretch reads SAL.

Belongs to the TRAFAC class translation factor GTPase superfamily. Classic translation factor GTPase family. EF-Tu/EF-1A subfamily. In terms of assembly, monomer.

It localises to the cytoplasm. The catalysed reaction is GTP + H2O = GDP + phosphate + H(+). Its function is as follows. GTP hydrolase that promotes the GTP-dependent binding of aminoacyl-tRNA to the A-site of ribosomes during protein biosynthesis. The polypeptide is Elongation factor Tu (Colwellia psychrerythraea (strain 34H / ATCC BAA-681) (Vibrio psychroerythus)).